We begin with the raw amino-acid sequence, 156 residues long: Small ribosomal subunit protein uS7 (156 aa).

This sequence belongs to the universal ribosomal protein uS7 family. In terms of assembly, part of the 30S ribosomal subunit. Contacts proteins S9 and S11.

One of the primary rRNA binding proteins, it binds directly to 16S rRNA where it nucleates assembly of the head domain of the 30S subunit. Is located at the subunit interface close to the decoding center, probably blocks exit of the E-site tRNA. The chain is Small ribosomal subunit protein uS7 from Mycoplasmopsis agalactiae (strain NCTC 10123 / CIP 59.7 / PG2) (Mycoplasma agalactiae).